A 497-amino-acid polypeptide reads, in one-letter code: Probable gamma-aminobutyrate transaminase 2, mitochondrial (497 aa).

A mitochondrion-targeting transit peptide spans 1–37 (MNLIKHAAFAASFQGETDCTSHASARKFSTSGSSPLL). 153-154 (GS) provides a ligand contact to pyridoxal 5'-phosphate. A substrate-binding site is contributed by Tyr-186. Asp-293 contacts pyridoxal 5'-phosphate. A substrate-binding site is contributed by Lys-322. Lys-322 is subject to N6-(pyridoxal phosphate)lysine.

Belongs to the class-III pyridoxal-phosphate-dependent aminotransferase family.

It localises to the mitochondrion. The catalysed reaction is 4-aminobutanoate + pyruvate = succinate semialdehyde + L-alanine. The enzyme catalyses 4-aminobutanoate + glyoxylate = succinate semialdehyde + glycine. Transaminase that degrades gamma-amino butyric acid (GABA). The protein is Probable gamma-aminobutyrate transaminase 2, mitochondrial of Oryza sativa subsp. indica (Rice).